The following is a 1270-amino-acid chain: DNA-directed RNA polymerase subunit beta (1270 aa).

Belongs to the RNA polymerase beta chain family. In terms of assembly, the RNAP catalytic core consists of 2 alpha, 1 beta, 1 beta' and 1 omega subunit. When a sigma factor is associated with the core the holoenzyme is formed, which can initiate transcription.

It catalyses the reaction RNA(n) + a ribonucleoside 5'-triphosphate = RNA(n+1) + diphosphate. DNA-dependent RNA polymerase catalyzes the transcription of DNA into RNA using the four ribonucleoside triphosphates as substrates. The polypeptide is DNA-directed RNA polymerase subunit beta (Flavobacterium johnsoniae (strain ATCC 17061 / DSM 2064 / JCM 8514 / BCRC 14874 / CCUG 350202 / NBRC 14942 / NCIMB 11054 / UW101) (Cytophaga johnsonae)).